A 55-amino-acid polypeptide reads, in one-letter code: Large ribosomal subunit protein bL32 (55 aa).

The protein belongs to the bacterial ribosomal protein bL32 family.

This is Large ribosomal subunit protein bL32 from Aeromonas hydrophila subsp. hydrophila (strain ATCC 7966 / DSM 30187 / BCRC 13018 / CCUG 14551 / JCM 1027 / KCTC 2358 / NCIMB 9240 / NCTC 8049).